Reading from the N-terminus, the 475-residue chain is Transmembrane protein 181 (475 aa).

9 consecutive transmembrane segments (helical) span residues 16–36 (HFVLVFVVFFICFGLTIFVGI), 131–151 (EIIVAHLGYLNYTQYTVIVGF), 175–195 (LEIWFRFFFVVLTFIVTCLFA), 214–234 (SVLLPLLLLYNDPFFPLSFLV), 245–265 (LFQSMFLCALLLFWLCVYHGI), 276–296 (FYLPKFFIVGLLWLASVTLGI), 320–340 (MKVFFMVVAAVYILYLLFLIV), 356–376 (LKFLTALTFVVLVISIAILYL), and 401–421 (FLSFYGLLNFYLYTLAFVYSP). Ser443 is subject to Phosphoserine.

This sequence belongs to the TMEM181 family. As to quaternary structure, interacts with cytolethal distending toxin.

Its subcellular location is the membrane. Mediates action of cytolethal distending toxins (CDT), which are secreted by many pathogenic bacteria. Expression level of TMEM181 is rate-limiting for intoxication. The polypeptide is Transmembrane protein 181 (TMEM181) (Homo sapiens (Human)).